The sequence spans 284 residues: MQNKIVKIGNIDVANDKPFVLFGGMNVLESRDMAMQVCESYVKVTEKLGVPYVFKASFDKANRSSIHSYRGPGMEEGLKIFQELKDTFGVKIITDVHEIYQCQPVADVVDIIQLPAFLARQTDLVEAMAKTGAVINVKKPQFLSPSQMGNIVEKIEECGNDKIILCDRGTNFGYDNLIVDMLGFSVMKKASKGSPVIFDVTHSLQCRDPFGAASSGRRAQVTELARSGLAVGIAGLFLEAHPNPNQAKCDGPSALPLSALEGFVFQMKAIDDLVKSFPELDTSI.

Belongs to the KdsA family.

The protein resides in the cytoplasm. It catalyses the reaction D-arabinose 5-phosphate + phosphoenolpyruvate + H2O = 3-deoxy-alpha-D-manno-2-octulosonate-8-phosphate + phosphate. It functions in the pathway carbohydrate biosynthesis; 3-deoxy-D-manno-octulosonate biosynthesis; 3-deoxy-D-manno-octulosonate from D-ribulose 5-phosphate: step 2/3. It participates in bacterial outer membrane biogenesis; lipopolysaccharide biosynthesis. In Haemophilus influenzae (strain PittEE), this protein is 2-dehydro-3-deoxyphosphooctonate aldolase.